A 441-amino-acid polypeptide reads, in one-letter code: Amino-acid acetyltransferase (441 aa).

The N-acetyltransferase domain maps to 295-434 (EQVRRATIND…QELYNYQRRS (140 aa)).

It belongs to the acetyltransferase family. ArgA subfamily. As to quaternary structure, homohexamer.

It localises to the cytoplasm. It catalyses the reaction L-glutamate + acetyl-CoA = N-acetyl-L-glutamate + CoA + H(+). It participates in amino-acid biosynthesis; L-arginine biosynthesis; N(2)-acetyl-L-ornithine from L-glutamate: step 1/4. This Yersinia pseudotuberculosis serotype O:1b (strain IP 31758) protein is Amino-acid acetyltransferase.